The chain runs to 388 residues: MASQTGVLLLNLGGPDRPEDVRPFLYNLFSDPEIIRLPFRWLQKPLAWFISTSRARRSQANYAQIGGGSPLRRITEQQARALKDALEGIGIEANLYIGMRYWHPFTEEAIAQIKADQIRELVILPLYPQFSISTSGSSFRLLESLWNQDPELQKIRYTLIPSWYNHPGYVAAMADLIRQELDRCPNPDEAVIFFSAHGVPKSYVTEAGDPYQEEIEACVRLIMAALNRPNAHVLAYQSRVGPVEWLQPYTEDVILELAAQGVKTLVVVPISFVSEHIETLQEIDIEYREIAAEAGIEVFRRVPALNDHNGFISALAQLVKEALAAPPRTFAEVNQSRKRVKLYPQERWEWGMTSAAERWNGRLAMLGFLALMIELISGQGPLHMLGLL.

Residues H197 and E278 each coordinate Fe cation.

This sequence belongs to the ferrochelatase family.

It is found in the cytoplasm. The enzyme catalyses heme b + 2 H(+) = protoporphyrin IX + Fe(2+). The protein operates within porphyrin-containing compound metabolism; protoheme biosynthesis; protoheme from protoporphyrin-IX: step 1/1. Catalyzes the ferrous insertion into protoporphyrin IX. This is Ferrochelatase from Thermosynechococcus vestitus (strain NIES-2133 / IAM M-273 / BP-1).